A 324-amino-acid polypeptide reads, in one-letter code: Putative S-adenosyl-L-methionine-dependent methyltransferase MMAR_1059 (324 aa).

S-adenosyl-L-methionine-binding positions include Asp138 and Asp167 to Leu168.

It belongs to the UPF0677 family.

In terms of biological role, exhibits S-adenosyl-L-methionine-dependent methyltransferase activity. This chain is Putative S-adenosyl-L-methionine-dependent methyltransferase MMAR_1059, found in Mycobacterium marinum (strain ATCC BAA-535 / M).